A 191-amino-acid chain; its full sequence is MEYFDMRKMSVNLWRNAAGETREICTFPPAKRDFYWRASIASIAANGEFSLFPGMERIVTLLEGGEMFLESADRFNHTLKPLQPFAFAADQVVKAKLTAGQMSMDFNIMTRLDVCKAKVRIAERTFTTFGSRGGVVFVINGAWQLGDKLLTTDQGACWFDGRHTLRLLQPQGKLLFSEINWLAGHSPDQVQ.

It belongs to the Ves family.

In Escherichia coli (strain SE11), this protein is Protein Ves.